Here is a 1770-residue protein sequence, read N- to C-terminus: Transposon Ty2-DR2 Gag-Pol polyprotein (1770 aa).

2 stretches are compositionally biased toward polar residues: residues 1–39 (MESQ…SASN) and 49–60 (KVNSQEETTPGT). 2 disordered regions span residues 1 to 89 (MESQ…QQHG) and 360 to 449 (HSEY…SNDE). Positions 295–397 (ENNINVSDRL…SSKPRAAKAH (103 aa)) are RNA-binding. Over residues 369–381 (TSPNTTNTKVTTR) the composition is skewed to low complexity. Polar residues-rich tracts occupy residues 399–408 (IATSSKFSRV) and 415–435 (ESTV…GQQQ). The active-site For protease activity; shared with dimeric partner is the aspartate 457. The interval 579–636 (NVNKSKSVNKYPYPLIHRMLGHANFRSIQKSLKKNAVTYLKESDIEWSNASTYQCPDC) is integrase-type zinc finger-like. The Integrase catalytic domain maps to 656–831 (ESYEPFQYLH…AGLDITTILP (176 aa)). 2 residues coordinate Mg(2+): aspartate 667 and aspartate 732. Disordered regions lie at residues 1005-1038 (GGTI…MIDL), 1059-1135 (TEEP…KSSK), and 1171-1222 (SRQT…LEPP). Polar residues-rich tracts occupy residues 1009–1024 (ESDT…FTAR) and 1065–1082 (QRNS…STPS). The short motif at 1193–1227 (KKRSLEDNETEIEVSRDTWNNKNMRSLEPPRSKKR) is the Bipartite nuclear localization signal element. Residues 1353 to 1491 (NDYYITQLDI…DILGLEIKYQ (139 aa)) form the Reverse transcriptase Ty1/copia-type domain. Positions 1361, 1442, 1443, 1625, 1667, and 1700 each coordinate Mg(2+). The RNase H Ty1/copia-type domain maps to 1625–1767 (DASYGNQPYY…IKTFKLLTNK (143 aa)).

As to quaternary structure, the capsid protein forms a homotrimer, from which the VLPs are assembled. The protease is a homodimer, whose active site consists of two apposed aspartic acid residues. Post-translationally, initially, virus-like particles (VLPs) are composed of the structural unprocessed proteins Gag and Gag-Pol, and also contain the host initiator methionine tRNA (tRNA(i)-Met) which serves as a primer for minus-strand DNA synthesis, and a dimer of genomic Ty RNA. Processing of the polyproteins occurs within the particle and proceeds by an ordered pathway, called maturation. First, the protease (PR) is released by autocatalytic cleavage of the Gag-Pol polyprotein, and this cleavage is a prerequisite for subsequent processing at the remaining sites to release the mature structural and catalytic proteins. Maturation takes place prior to the RT reaction and is required to produce transposition-competent VLPs.

It is found in the cytoplasm. The protein localises to the nucleus. The catalysed reaction is DNA(n) + a 2'-deoxyribonucleoside 5'-triphosphate = DNA(n+1) + diphosphate. It carries out the reaction Endonucleolytic cleavage to 5'-phosphomonoester.. Its function is as follows. Capsid protein (CA) is the structural component of the virus-like particle (VLP), forming the shell that encapsulates the retrotransposons dimeric RNA genome. The particles are assembled from trimer-clustered units and there are holes in the capsid shells that allow for the diffusion of macromolecules. CA also has nucleocapsid-like chaperone activity, promoting primer tRNA(i)-Met annealing to the multipartite primer-binding site (PBS), dimerization of Ty2 RNA and initiation of reverse transcription. In terms of biological role, the aspartyl protease (PR) mediates the proteolytic cleavages of the Gag and Gag-Pol polyproteins after assembly of the VLP. Reverse transcriptase/ribonuclease H (RT) is a multifunctional enzyme that catalyzes the conversion of the retro-elements RNA genome into dsDNA within the VLP. The enzyme displays a DNA polymerase activity that can copy either DNA or RNA templates, and a ribonuclease H (RNase H) activity that cleaves the RNA strand of RNA-DNA heteroduplexes during plus-strand synthesis and hydrolyzes RNA primers. The conversion leads to a linear dsDNA copy of the retrotransposon that includes long terminal repeats (LTRs) at both ends. Functionally, integrase (IN) targets the VLP to the nucleus, where a subparticle preintegration complex (PIC) containing at least integrase and the newly synthesized dsDNA copy of the retrotransposon must transit the nuclear membrane. Once in the nucleus, integrase performs the integration of the dsDNA into the host genome. The protein is Transposon Ty2-DR2 Gag-Pol polyprotein (TY2B-DR2) of Saccharomyces cerevisiae (strain ATCC 204508 / S288c) (Baker's yeast).